The sequence spans 232 residues: Phosphatidylserine decarboxylase proenzyme (232 aa).

Ser190 (schiff-base intermediate with substrate; via pyruvic acid) is an active-site residue. Ser190 is modified (pyruvic acid (Ser); by autocatalysis).

It belongs to the phosphatidylserine decarboxylase family. PSD-A subfamily. As to quaternary structure, heterodimer of a large membrane-associated beta subunit and a small pyruvoyl-containing alpha subunit. The cofactor is pyruvate. Post-translationally, is synthesized initially as an inactive proenzyme. Formation of the active enzyme involves a self-maturation process in which the active site pyruvoyl group is generated from an internal serine residue via an autocatalytic post-translational modification. Two non-identical subunits are generated from the proenzyme in this reaction, and the pyruvate is formed at the N-terminus of the alpha chain, which is derived from the carboxyl end of the proenzyme. The post-translation cleavage follows an unusual pathway, termed non-hydrolytic serinolysis, in which the side chain hydroxyl group of the serine supplies its oxygen atom to form the C-terminus of the beta chain, while the remainder of the serine residue undergoes an oxidative deamination to produce ammonia and the pyruvoyl prosthetic group on the alpha chain.

The protein resides in the cell membrane. It catalyses the reaction a 1,2-diacyl-sn-glycero-3-phospho-L-serine + H(+) = a 1,2-diacyl-sn-glycero-3-phosphoethanolamine + CO2. Its pathway is phospholipid metabolism; phosphatidylethanolamine biosynthesis; phosphatidylethanolamine from CDP-diacylglycerol: step 2/2. Its function is as follows. Catalyzes the formation of phosphatidylethanolamine (PtdEtn) from phosphatidylserine (PtdSer). This is Phosphatidylserine decarboxylase proenzyme from Sinorhizobium medicae (strain WSM419) (Ensifer medicae).